We begin with the raw amino-acid sequence, 685 residues long: T-box transcription factor TBX2 (685 aa).

Residues 104–277 (LWDQFHKLGT…NNPFAKGFRD (174 aa)) constitute a DNA-binding region (T-box). Disordered stretches follow at residues 270-433 (PFAK…CGSL) and 606-660 (NLLT…SINE). Basic and acidic residues-rich tracts occupy residues 296 to 308 (MYEE…RDGA), 340 to 361 (SNRE…EVRT), 378 to 403 (RLED…KDGG), and 410 to 428 (SLEK…KSDP). The span at 606–617 (NLLTTGLSASLN) shows a compositional bias: polar residues. Residues 618–633 (PGSESSKPGSSRESSP) show a composition bias toward low complexity. The stretch at 652-676 (ASMKDSINELQNIQRLVSGLESQRE) forms a coiled coil.

As to quaternary structure, binds DNA as a monomer.

It localises to the nucleus. Its function is as follows. Transcription factor which acts as a transcriptional repressor. May also function as a transcriptional activator. Binds to the palindromic T site 5'-TTCACACCTAGGTGTGAA-3' DNA sequence, or a half-site, which are present in the regulatory region of several genes. The protein is T-box transcription factor TBX2 (tbx2) of Xenopus tropicalis (Western clawed frog).